Consider the following 105-residue polypeptide: Large ribosomal subunit protein uL24 (105 aa).

This sequence belongs to the universal ribosomal protein uL24 family. As to quaternary structure, part of the 50S ribosomal subunit.

Its function is as follows. One of two assembly initiator proteins, it binds directly to the 5'-end of the 23S rRNA, where it nucleates assembly of the 50S subunit. One of the proteins that surrounds the polypeptide exit tunnel on the outside of the subunit. The chain is Large ribosomal subunit protein uL24 from Nitrosococcus oceani (strain ATCC 19707 / BCRC 17464 / JCM 30415 / NCIMB 11848 / C-107).